The sequence spans 281 residues: Nucleoid occlusion protein (281 aa).

Residues 1–26 (MKHPFSRLFSFGEKEQEEAGGKQERE) are disordered. The segment covering 12–26 (GEKEQEEAGGKQERE) has biased composition (basic and acidic residues). Residues 145–164 (EALAQRLGKGQSTIANKLRL) constitute a DNA-binding region (H-T-H motif).

Belongs to the ParB family.

It is found in the cytoplasm. Its subcellular location is the nucleoid. Functionally, effects nucleoid occlusion by binding relatively nonspecifically to DNA and preventing the assembly of the division machinery in the vicinity of the nucleoid, especially under conditions that disturb the cell cycle. It helps to coordinate cell division and chromosome segregation by preventing the formation of the Z ring through the nucleoid, which would cause chromosome breakage. This Geobacillus thermodenitrificans (strain NG80-2) protein is Nucleoid occlusion protein.